The chain runs to 182 residues: Plasmolipin (182 aa).

At 1–35 the chain is on the cytoplasmic side; the sequence is MAEFPSKVSTRTSSPAQGAEASVSALRPDLGFVRS. A Phosphoserine modification is found at S9. The MARVEL domain maps to 32–166; it reads FVRSRLGALM…SAFFSYQAWR (135 aa). Residues 36-56 traverse the membrane as a helical segment; that stretch reads RLGALMLLQLVLGLLVWALIA. The Extracellular segment spans residues 57–68; sequence DTPYHLYPAYGW. Residues 69-89 form a helical membrane-spanning segment; it reads VMFVAVFLWLVTIVLFNLYLF. At 90–99 the chain is on the cytoplasmic side; sequence QLHMKLYMVP. Residues 100-120 form a helical membrane-spanning segment; it reads WPLVLMIFNISATVLYITAFI. At 121-141 the chain is on the extracellular side; it reads ACSAAVDLTSLRGTRPYNQRA. The helical transmembrane segment at 142–162 threads the bilayer; sequence AASFFACLVMIAYGVSAFFSY. Residues 163-182 lie on the Cytoplasmic side of the membrane; sequence QAWRGVGSNAATSQMAGGYA.

This sequence belongs to the MAL family. In terms of assembly, forms oligomers. Phosphorylated.

The protein localises to the cell membrane. The protein resides in the myelin membrane. It is found in the apical cell membrane. Its subcellular location is the golgi apparatus. Main component of the myelin sheath that plays an important role in myelin membrane biogenesis and myelination. Plays an essential function in apical endocytosis. Regulates epithelial development through the regulation of apical endocytosis. Part of the intracellular machinery that mediates basolateral-to-apical transport of ICAM-1, an essential adhesion receptor in epithelial cells, from the subapical compartment in hepatic epithelial cells. The chain is Plasmolipin from Homo sapiens (Human).